The chain runs to 444 residues: Phosphoglucosamine mutase (444 aa).

S104 acts as the Phosphoserine intermediate in catalysis. S104, D243, D245, and D247 together coordinate Mg(2+). Phosphoserine is present on S104.

This sequence belongs to the phosphohexose mutase family. It depends on Mg(2+) as a cofactor. In terms of processing, activated by phosphorylation.

It catalyses the reaction alpha-D-glucosamine 1-phosphate = D-glucosamine 6-phosphate. Catalyzes the conversion of glucosamine-6-phosphate to glucosamine-1-phosphate. The chain is Phosphoglucosamine mutase from Neisseria meningitidis serogroup C (strain 053442).